A 502-amino-acid chain; its full sequence is Tyrosine-protein kinase receptor old-1 (502 aa).

The first 19 residues, 1 to 19 (MKGTLIFVVFYSSYGFAHC), serve as a signal peptide directing secretion. The Extracellular segment spans residues 20–58 (NTILRSSSLSRNFEDSLRRIPRSTDKDETGFEDSNVQEV). The helical transmembrane segment at 59-79 (IFILLYCLFVALAILICGLII) threads the bilayer. Residues 80–502 (FYNSRKRELR…WLSDEKHCDS (423 aa)) lie on the Cytoplasmic side of the membrane. The interval 99 to 140 (LLEPTSADHKRRNSSNIVPPEPTPYPITSGESDLRQTPSRLS) is disordered. Positions 127 to 140 (SGESDLRQTPSRLS) are enriched in polar residues. The Protein kinase domain occupies 175–473 (ISKGRPLGSG…ELKTTSNEYF (299 aa)). ATP is bound by residues 181–189 (LGSGEFGII) and K213. D321 serves as the catalytic Proton acceptor.

The protein belongs to the protein kinase superfamily. Tyr protein kinase family.

It is found in the cell membrane. The enzyme catalyses L-tyrosyl-[protein] + ATP = O-phospho-L-tyrosyl-[protein] + ADP + H(+). Its function is as follows. Receptor tyrosine kinase which plays a role in promoting longevity and resistance to stresses including UV irradiation and high temperatures, probably downstream of daf-16. The sequence is that of Tyrosine-protein kinase receptor old-1 from Caenorhabditis elegans.